The primary structure comprises 226 residues: 7-cyano-7-deazaguanine synthase (226 aa).

Residue 7 to 17 coordinates ATP; that stretch reads ISGGMDSLVTT. Residues Cys-187, Cys-195, Cys-198, and Cys-201 each contribute to the Zn(2+) site.

It belongs to the QueC family. Zn(2+) is required as a cofactor.

The catalysed reaction is 7-carboxy-7-deazaguanine + NH4(+) + ATP = 7-cyano-7-deazaguanine + ADP + phosphate + H2O + H(+). It participates in purine metabolism; 7-cyano-7-deazaguanine biosynthesis. Catalyzes the ATP-dependent conversion of 7-carboxy-7-deazaguanine (CDG) to 7-cyano-7-deazaguanine (preQ(0)). This is 7-cyano-7-deazaguanine synthase from Chlorobium limicola (strain DSM 245 / NBRC 103803 / 6330).